The sequence spans 199 residues: MAAAGDEIETLIATMARLPGLGPRSARRIVLHLIRRRTGQMAQLAGLMANVAEHARECLVCGNVTGSDICPICEDPDRATGEICVVTDVADLWALERGRAFHGRYHVLGGSLSALDEVGPEDLRIPQLIARIAEEGITEVILALSATVEGQTTAHYIAEALAPTGVAVTGLAQGVPIGGELDYLDDGTITAALRARRKL.

The C4-type zinc finger occupies 58–73 (CLVCGNVTGSDICPIC). In terms of domain architecture, Toprim spans 81-176 (GEICVVTDVA…AVTGLAQGVP (96 aa)).

Belongs to the RecR family.

In terms of biological role, may play a role in DNA repair. It seems to be involved in an RecBC-independent recombinational process of DNA repair. It may act with RecF and RecO. This chain is Recombination protein RecR, found in Paracoccus denitrificans (strain Pd 1222).